The chain runs to 331 residues: MLPKIAVIGEGVIGCTSALQIAKAIPNSKITIFHDKPFENSCSAGPAGLFRIDYEENTEYGRASFAWFSHLYRTTKGAETGVKLVSGHIQSDNLESLKQQQRAYGDIVYNFRFLDDRERLDIFPSPSKHCIHYTAYASEGNKYVPYLKRLLLEQKVEFQQKNVENLDTIADAGYDVIVNCAGLYGGKLAGDDDQCYPIRGVILEVDAPWHKHFNYRDFTTFTIPKENSVVIGSTKQDNRWDLEITDEDRNDILSRYIELHPGMREPKILKEWSALRPGRKHVRIESQQRKTTETGKEYTVVHHYGHGSNGFTLGWGTAIEATKLVKKALGL.

Positions 35, 36, 43, and 307 each coordinate FAD.

This sequence belongs to the DAMOX/DASOX family. FAD serves as cofactor.

The protein localises to the cytoplasm. The catalysed reaction is D-aspartate + O2 + H2O = oxaloacetate + H2O2 + NH4(+). The enzyme catalyses D-glutamate + O2 + H2O = H2O2 + 2-oxoglutarate + NH4(+). In terms of biological role, selectively catalyzes the oxidative deamination of acidic amino acids. May play a role in the egg-laying events and early development of the worm, in addition to quality control of the germ cells. This chain is D-aspartate oxidase 2, found in Caenorhabditis briggsae.